The chain runs to 949 residues: MAM domain-containing glycosylphosphatidylinositol anchor protein 2 (949 aa).

The signal sequence occupies residues 1 to 25; that stretch reads MDLVYGLVWLLTVLLEGISGQGVYA. 2 consecutive Ig-like domains span residues 27-127 and 134-232; these read PTVR…IRVD and PVVT…KMVS. Disulfide bonds link Cys-62–Cys-110 and Cys-159–Cys-216. N-linked (GlcNAc...) asparagine glycosylation is found at Asn-92, Asn-213, and Asn-237. 4 consecutive Ig-like domains span residues 242-328, 340-436, 442-533, and 540-627; these read PSIK…NIIV, PDPY…VNIS, PNLT…ALVQ, and PAVE…FLVT. Cystine bridges form between Cys-264-Cys-310 and Cys-359-Cys-417. 5 N-linked (GlcNAc...) asparagine glycosylation sites follow: Asn-434, Asn-443, Asn-504, Asn-610, and Asn-703. Disulfide bonds link Cys-465–Cys-515 and Cys-561–Cys-611. The Fibronectin type-III domain occupies 638 to 738; sequence DTYNPVWQNR…TIRVIKYTGE (101 aa). The MAM domain maps to 739–914; it reads FHCGFEDGNI…VSIAEGECAK (176 aa). The GPI-anchor amidated aspartate moiety is linked to residue Asp-924. Positions 925 to 949 are cleaved as a propeptide — removed in mature form; sequence GAVGILVHIWLFPVIILISILSPRR.

Interacts (through the Ig-like domains) with NLGN2.

The protein resides in the cell membrane. May be involved in cell-cell interactions. This Mus musculus (Mouse) protein is MAM domain-containing glycosylphosphatidylinositol anchor protein 2 (Mdga2).